Reading from the N-terminus, the 128-residue chain is Glycoprotein hormone alpha-2 (128 aa).

Positions 1 to 20 (MPMAPRVLLLCLLGLAVTEG) are cleaved as a signal peptide. Cystine bridges form between Cys30–Cys88, Cys47–Cys102, Cys56–Cys118, and Cys60–Cys120. 2 N-linked (GlcNAc...) asparagine glycosylation sites follow: Asn36 and Asn80.

The protein belongs to the glycoprotein hormones subunit alpha family. As to quaternary structure, heterodimer with GPHB5; this heterodimer interacts with thyroid-stimulating hormone receptor (TSHR), and hence stimulates cAMP production.

The protein resides in the secreted. Functionally, functions as a heterodimeric glycoprotein hormone with GPHB5 able to bind and activate the thyroid-stimulating hormone receptor (TSHR), leading to increased cAMP production. Plays a central role in controlling thyroid cell metabolism. The protein is Glycoprotein hormone alpha-2 (Gpha2) of Mus musculus (Mouse).